The sequence spans 67 residues: Neurotoxin Os3 (67 aa).

Positions 3-67 (RDGYIAQPHN…GVIVDGEKCH (65 aa)) constitute an LCN-type CS-alpha/beta domain. Cystine bridges form between cysteine 13–cysteine 66, cysteine 17–cysteine 39, cysteine 24–cysteine 48, and cysteine 28–cysteine 50.

Belongs to the long (4 C-C) scorpion toxin superfamily. Sodium channel inhibitor family. Alpha subfamily. As to expression, expressed by the venom gland.

The protein localises to the secreted. In terms of biological role, binds to sodium channels (Nav) and inhibits the inactivation of the activated channels, thereby blocking neuronal transmission. This is Neurotoxin Os3 from Orthochirus scrobiculosus (Central Asian scorpion).